The sequence spans 113 residues: Hydrogenase maturation factor HypA (113 aa).

Histidine 2 contacts Ni(2+). 4 residues coordinate Zn(2+): cysteine 73, cysteine 76, cysteine 89, and cysteine 92.

Belongs to the HypA/HybF family.

Its function is as follows. Involved in the maturation of [NiFe] hydrogenases. Required for nickel insertion into the metal center of the hydrogenase. This is Hydrogenase maturation factor HypA from Alkalilimnicola ehrlichii (strain ATCC BAA-1101 / DSM 17681 / MLHE-1).